We begin with the raw amino-acid sequence, 58 residues long: U11-myrmicitoxin-Tb1a (58 aa).

The propeptide occupies 1–24 (LAMAMGDAVADAQARAMAAAYAIA). The cysteines at positions 34 and 57 are disulfide-linked.

It belongs to the formicidae venom precursor-01 superfamily. Expressed by the venom gland.

It is found in the secreted. The protein localises to the target cell membrane. Neurotoxin that causes irreversible rapid flaccid paralysis in blowflies and honeybees upon intrathoracic injection. Causes a quick and irreversible cytolytic effect (at 10 uM) indicating it possibly acts as a pore-forming peptide. Shows only weak effect on aphids (A.pisum) at high doses 24 hours post intrathoracic injection. In vitro, is not cytotoxic on the dipteran S2 Drosophila embryonic cell line. In Tetramorium bicarinatum (Tramp ant), this protein is U11-myrmicitoxin-Tb1a.